Consider the following 209-residue polypeptide: Thiamine-phosphate synthase (209 aa).

Residues Gln-36–Lys-40 and Asn-68 each bind 4-amino-2-methyl-5-(diphosphooxymethyl)pyrimidine. The Mg(2+) site is built by Asp-69 and Asp-87. 4-amino-2-methyl-5-(diphosphooxymethyl)pyrimidine is bound at residue Thr-106. Ser-133 to Thr-135 is a binding site for 2-[(2R,5Z)-2-carboxy-4-methylthiazol-5(2H)-ylidene]ethyl phosphate. Residue Lys-136 participates in 4-amino-2-methyl-5-(diphosphooxymethyl)pyrimidine binding. Gly-163 is a binding site for 2-[(2R,5Z)-2-carboxy-4-methylthiazol-5(2H)-ylidene]ethyl phosphate.

This sequence belongs to the thiamine-phosphate synthase family. The cofactor is Mg(2+).

It catalyses the reaction 2-[(2R,5Z)-2-carboxy-4-methylthiazol-5(2H)-ylidene]ethyl phosphate + 4-amino-2-methyl-5-(diphosphooxymethyl)pyrimidine + 2 H(+) = thiamine phosphate + CO2 + diphosphate. The catalysed reaction is 2-(2-carboxy-4-methylthiazol-5-yl)ethyl phosphate + 4-amino-2-methyl-5-(diphosphooxymethyl)pyrimidine + 2 H(+) = thiamine phosphate + CO2 + diphosphate. It carries out the reaction 4-methyl-5-(2-phosphooxyethyl)-thiazole + 4-amino-2-methyl-5-(diphosphooxymethyl)pyrimidine + H(+) = thiamine phosphate + diphosphate. It functions in the pathway cofactor biosynthesis; thiamine diphosphate biosynthesis; thiamine phosphate from 4-amino-2-methyl-5-diphosphomethylpyrimidine and 4-methyl-5-(2-phosphoethyl)-thiazole: step 1/1. In terms of biological role, condenses 4-methyl-5-(beta-hydroxyethyl)thiazole monophosphate (THZ-P) and 2-methyl-4-amino-5-hydroxymethyl pyrimidine pyrophosphate (HMP-PP) to form thiamine monophosphate (TMP). This is Thiamine-phosphate synthase from Azotobacter vinelandii (strain DJ / ATCC BAA-1303).